Here is a 521-residue protein sequence, read N- to C-terminus: Vang-like protein 2-A (521 aa).

A disordered region spans residues 1–81 (MDNDSQYSGY…TTVVTGTSEH (81 aa)). Residues 1 to 108 (MDNDSQYSGY…AKLDCSRHLG (108 aa)) are Cytoplasmic-facing. Residues 15–33 (GHSRSSRKHRDRRERHRSK) are compositionally biased toward basic residues. A compositionally biased stretch (basic and acidic residues) spans 57–67 (ESTRGEDRDDN). Low complexity predominate over residues 69–81 (GETTTVVTGTSEH). Residues 109–129 (VVIGGALALLSFLTPIAFMLL) form a helical membrane-spanning segment. At 130–147 (PQILWREDLEQCGTACEG) the chain is on the extracellular side. The helical transmembrane segment at 148 to 168 (LFISVAFKLLILLLGSWALFF) threads the bilayer. Residues 169-178 (RRPKAFFPRV) are Cytoplasmic-facing. A helical membrane pass occupies residues 179 to 199 (FVFRALLMVLVFLLVVSYWLF). Residues 200 to 218 (YGVRILESRDKNYQGIVQY) lie on the Extracellular side of the membrane. The chain crosses the membrane as a helical span at residues 219-239 (AVSLVDALLFVHYLAVVLLEL). Over 240-521 (RQLQPQFTIK…VMRLQSETSV (282 aa)) the chain is Cytoplasmic. Positions 518–521 (ETSV) match the PDZ-binding motif.

Belongs to the Vang family. In terms of assembly, interacts with dvl/dsh. Interacts with prickle3. As to expression, during gastrulation, broadly expressed throughout the marginal zone and animal cap region. From the neurula stages, expression becomes concentrated in neural tissues, in the neural plate and neural tube.

Its subcellular location is the cell membrane. Its function is as follows. Has a role in non-canonical Wnt/planar cell polarity (PCP) signaling; can recruit dvl/dsh and prickle from the cytoplasm to the plasma membrane. Acts in a PCP complex to regulate the polarized assembly of fibronectrin on the surface of the mesoderm during gastrulation. Regulates convergent extension cell movements in both dorsal mesoderm and neural tissue during gastrulation, without affecting cell fate. Regulates neural fold closure during neurulation. May be required for cell surface localization of fzd3 and fzd6 in the inner ear. In Xenopus laevis (African clawed frog), this protein is Vang-like protein 2-A (vangl2-a).